Reading from the N-terminus, the 238-residue chain is MQWREMGVVMGTRPYGDEHLLLSILTRNRGLRRGLTRFTKKRPLQIGDLIDATWRAKLPTNLGHFTCEVIASAFYSYFRDRIKLMCLSSITHIMSTALPENEPHPTLYDSFQDFAAAAEAEAPWYNHYLKLELLVLSQLGFALDLSKCAVSNSKDNLLFISPKTGRALSEAVGCAYRDKLLPLPKVLRSISCGVETECCSADEFALSLRILGFFLRRHLLQESHTFQESRKILTGLLG.

Belongs to the RecO family.

Involved in DNA repair and RecF pathway recombination. The sequence is that of DNA repair protein RecO from Anaplasma marginale (strain St. Maries).